The following is a 209-amino-acid chain: Small ribosomal subunit protein uS4 (209 aa).

Residues 99–179 (GRLDSVAYRM…FPEWIEVDAK (81 aa)) form the S4 RNA-binding domain.

The protein belongs to the universal ribosomal protein uS4 family. Part of the 30S ribosomal subunit. Contacts protein S5. The interaction surface between S4 and S5 is involved in control of translational fidelity.

Its function is as follows. One of the primary rRNA binding proteins, it binds directly to 16S rRNA where it nucleates assembly of the body of the 30S subunit. Functionally, with S5 and S12 plays an important role in translational accuracy. The chain is Small ribosomal subunit protein uS4 from Azoarcus sp. (strain BH72).